Reading from the N-terminus, the 342-residue chain is Anthranilate phosphoribosyltransferase (342 aa).

Residues glycine 83, 86-87 (GD), threonine 91, 93-96 (NIST), 111-119 (KHGNRGVSS), and serine 123 contribute to the 5-phospho-alpha-D-ribose 1-diphosphate site. Glycine 83 lines the anthranilate pocket. Serine 95 is a Mg(2+) binding site. An anthranilate-binding site is contributed by asparagine 114. Position 169 (arginine 169) interacts with anthranilate. Mg(2+)-binding residues include aspartate 228 and glutamate 229.

The protein belongs to the anthranilate phosphoribosyltransferase family. Homodimer. Requires Mg(2+) as cofactor.

It catalyses the reaction N-(5-phospho-beta-D-ribosyl)anthranilate + diphosphate = 5-phospho-alpha-D-ribose 1-diphosphate + anthranilate. The protein operates within amino-acid biosynthesis; L-tryptophan biosynthesis; L-tryptophan from chorismate: step 2/5. Its function is as follows. Catalyzes the transfer of the phosphoribosyl group of 5-phosphorylribose-1-pyrophosphate (PRPP) to anthranilate to yield N-(5'-phosphoribosyl)-anthranilate (PRA). The polypeptide is Anthranilate phosphoribosyltransferase (Paraburkholderia phymatum (strain DSM 17167 / CIP 108236 / LMG 21445 / STM815) (Burkholderia phymatum)).